The primary structure comprises 957 residues: Histone-lysine N-methyltransferase, H3 lysine-9 specific SUVH3 (957 aa).

A YDG domain is found at 73 to 243 (GHPPGVALGD…PQVCKFLMHG (171 aa)). Residues 182–209 (EAGGGEGGGGGEGGGGAKKGKGGKGGGK) are disordered. Over residues 183 to 198 (AGGGEGGGGGEGGGGA) the composition is skewed to gly residues. Residues 319 to 441 (DVSGGQEAVP…HECGDGCSAK (123 aa)) enclose the Pre-SET domain. In terms of domain architecture, SET spans 455–920 (LPLEVFMTES…QLEELSYNYG (466 aa)). Disordered stretches follow at residues 552 to 595 (DAAR…GGAE), 611 to 647 (AAGT…SSGA), and 783 to 805 (PPAL…GGGG). Residues 560–578 (QQPQQQQPQQQQQQPAAGG) show a composition bias toward low complexity. The segment covering 793–805 (GNGGTTGSGGGGG) has biased composition (gly residues). A Post-SET domain is found at 941–957 (FVMQCNCGAVGCIGNLM).

The protein belongs to the class V-like SAM-binding methyltransferase superfamily. Histone-lysine methyltransferase family. Suvar3-9 subfamily.

The protein resides in the nucleus. It localises to the chromosome. The catalysed reaction is L-lysyl(9)-[histone H3] + S-adenosyl-L-methionine = N(6)-methyl-L-lysyl(9)-[histone H3] + S-adenosyl-L-homocysteine + H(+). In terms of biological role, histone methyltransferase. Monomethylates specifically 'Lys-9' of histone H3. H3 'Lys-9Me1' (H3K9me1) functions as an epigenetic mark of repressed chromatin. The chain is Histone-lysine N-methyltransferase, H3 lysine-9 specific SUVH3 (SUVH3) from Chlamydomonas reinhardtii (Chlamydomonas smithii).